A 546-amino-acid chain; its full sequence is CTP synthase (546 aa).

The interval M1–L267 is amidoligase domain. Position 13 (S13) interacts with CTP. S13 is a UTP binding site. ATP is bound by residues S14–I19 and D71. Positions 71 and 141 each coordinate Mg(2+). CTP is bound by residues D148–E150, K188–Q193, and K224. Residues K188–Q193 and K224 each bind UTP. The Glutamine amidotransferase type-1 domain occupies E292–E534. G354 serves as a coordination point for L-glutamine. The Nucleophile; for glutamine hydrolysis role is filled by C381. Residues L382–Q385, E405, and R462 each bind L-glutamine. Residues H507 and E509 contribute to the active site.

The protein belongs to the CTP synthase family. Homotetramer.

It carries out the reaction UTP + L-glutamine + ATP + H2O = CTP + L-glutamate + ADP + phosphate + 2 H(+). The catalysed reaction is L-glutamine + H2O = L-glutamate + NH4(+). It catalyses the reaction UTP + NH4(+) + ATP = CTP + ADP + phosphate + 2 H(+). The protein operates within pyrimidine metabolism; CTP biosynthesis via de novo pathway; CTP from UDP: step 2/2. Its activity is regulated as follows. Allosterically activated by GTP, when glutamine is the substrate; GTP has no effect on the reaction when ammonia is the substrate. The allosteric effector GTP functions by stabilizing the protein conformation that binds the tetrahedral intermediate(s) formed during glutamine hydrolysis. Inhibited by the product CTP, via allosteric rather than competitive inhibition. Catalyzes the ATP-dependent amination of UTP to CTP with either L-glutamine or ammonia as the source of nitrogen. Regulates intracellular CTP levels through interactions with the four ribonucleotide triphosphates. The protein is CTP synthase of Microcystis aeruginosa (strain NIES-843 / IAM M-2473).